We begin with the raw amino-acid sequence, 270 residues long: 2-dehydro-3-deoxyphosphooctonate aldolase (270 aa).

The protein belongs to the KdsA family.

It is found in the cytoplasm. The enzyme catalyses D-arabinose 5-phosphate + phosphoenolpyruvate + H2O = 3-deoxy-alpha-D-manno-2-octulosonate-8-phosphate + phosphate. It participates in carbohydrate biosynthesis; 3-deoxy-D-manno-octulosonate biosynthesis; 3-deoxy-D-manno-octulosonate from D-ribulose 5-phosphate: step 2/3. Its pathway is bacterial outer membrane biogenesis; lipopolysaccharide biosynthesis. This is 2-dehydro-3-deoxyphosphooctonate aldolase from Helicobacter hepaticus (strain ATCC 51449 / 3B1).